Here is a 148-residue protein sequence, read N- to C-terminus: uncharacterized protein (148 aa).

This is an uncharacterized protein from Bos taurus (Bovine).